Here is a 292-residue protein sequence, read N- to C-terminus: Small ribosomal subunit biogenesis GTPase RsgA (292 aa).

In terms of domain architecture, CP-type G spans 64 to 221 (RSELFRPAVA…LVDTPGFSSL (158 aa)). Residues 113–116 (NKMD) and 164–172 (GPSGVGKST) each bind GTP. Zn(2+)-binding residues include cysteine 245, cysteine 250, histidine 252, and cysteine 258.

It belongs to the TRAFAC class YlqF/YawG GTPase family. RsgA subfamily. As to quaternary structure, monomer. Associates with 30S ribosomal subunit, binds 16S rRNA. It depends on Zn(2+) as a cofactor.

It is found in the cytoplasm. In terms of biological role, one of several proteins that assist in the late maturation steps of the functional core of the 30S ribosomal subunit. Helps release RbfA from mature subunits. May play a role in the assembly of ribosomal proteins into the subunit. Circularly permuted GTPase that catalyzes slow GTP hydrolysis, GTPase activity is stimulated by the 30S ribosomal subunit. The protein is Small ribosomal subunit biogenesis GTPase RsgA of Clostridium botulinum (strain Kyoto / Type A2).